The sequence spans 876 residues: Alanine--tRNA ligase (876 aa).

Residues His-566, His-570, Cys-668, and His-672 each contribute to the Zn(2+) site.

The protein belongs to the class-II aminoacyl-tRNA synthetase family. The cofactor is Zn(2+).

The protein resides in the cytoplasm. It catalyses the reaction tRNA(Ala) + L-alanine + ATP = L-alanyl-tRNA(Ala) + AMP + diphosphate. Functionally, catalyzes the attachment of alanine to tRNA(Ala) in a two-step reaction: alanine is first activated by ATP to form Ala-AMP and then transferred to the acceptor end of tRNA(Ala). Also edits incorrectly charged Ser-tRNA(Ala) and Gly-tRNA(Ala) via its editing domain. In Petrotoga mobilis (strain DSM 10674 / SJ95), this protein is Alanine--tRNA ligase.